The following is a 388-amino-acid chain: Succinate--CoA ligase [ADP-forming] subunit beta (388 aa).

The ATP-grasp domain occupies 9 to 244 (KQLFKEFGLP…PSQDDAREAE (236 aa)). ATP-binding positions include K46, 53–55 (GRG), E99, T102, and E107. Residues N199 and D213 each coordinate Mg(2+). Substrate-binding positions include N264 and 321-323 (GIV).

This sequence belongs to the succinate/malate CoA ligase beta subunit family. As to quaternary structure, heterotetramer of two alpha and two beta subunits. It depends on Mg(2+) as a cofactor.

The enzyme catalyses succinate + ATP + CoA = succinyl-CoA + ADP + phosphate. The catalysed reaction is GTP + succinate + CoA = succinyl-CoA + GDP + phosphate. It functions in the pathway carbohydrate metabolism; tricarboxylic acid cycle; succinate from succinyl-CoA (ligase route): step 1/1. In terms of biological role, succinyl-CoA synthetase functions in the citric acid cycle (TCA), coupling the hydrolysis of succinyl-CoA to the synthesis of either ATP or GTP and thus represents the only step of substrate-level phosphorylation in the TCA. The beta subunit provides nucleotide specificity of the enzyme and binds the substrate succinate, while the binding sites for coenzyme A and phosphate are found in the alpha subunit. The polypeptide is Succinate--CoA ligase [ADP-forming] subunit beta (Idiomarina loihiensis (strain ATCC BAA-735 / DSM 15497 / L2-TR)).